Here is a 730-residue protein sequence, read N- to C-terminus: Arginine decarboxylase 1B, chloroplastic (730 aa).

Residues 1-37 (MPALGCCVDAAVSPPPGYSFLWDSSLPAPEIFPSGVP) constitute a chloroplast transit peptide. N6-(pyridoxal phosphate)lysine is present on Lys157. Pyridoxal 5'-phosphate contacts are provided by residues Ser309, Gly346, and 395 to 398 (ESGR). 460–461 (YA) serves as a coordination point for substrate. Residue Cys548 is the Proton donor; shared with dimeric partner of the active site. Asp549 is a binding site for substrate. Tyr590 contacts pyridoxal 5'-phosphate.

This sequence belongs to the Orn/Lys/Arg decarboxylase class-II family. SpeA subfamily. The cofactor is Mg(2+). Pyridoxal 5'-phosphate is required as a cofactor.

It localises to the plastid. It is found in the chloroplast. The enzyme catalyses L-arginine + H(+) = agmatine + CO2. The protein operates within alkaloid biosynthesis; nicotine biosynthesis. It functions in the pathway amine and polyamine biosynthesis; agmatine biosynthesis; agmatine from L-arginine: step 1/1. Its function is as follows. Involved in the biosynthesis of pyridine alkaloid natural products, leading mainly to the production of anabasine, anatabine, nicotine and nornicotine, effective deterrents against herbivores with antiparasitic and pesticide properties (neurotoxins); nornicotine serves as the precursor in the synthesis of the carcinogen compound N'-nitrosonornicotine (NNN). Required for the biosynthesis of putrescine. Catalyzes the first step of polyamine (PA) biosynthesis to produce putrescine from arginine. The protein is Arginine decarboxylase 1B, chloroplastic of Nicotiana tabacum (Common tobacco).